We begin with the raw amino-acid sequence, 306 residues long: Phosphoadenosine phosphosulfate reductase (306 aa).

Disordered stretches follow at residues 1-30 (MPAKMHSNYPSDSETAELRDSTESGYVSGG) and 245-266 (YHSTSPVKENEDERSGRWKGQA).

The protein belongs to the PAPS reductase family. CysH subfamily.

It catalyses the reaction [thioredoxin]-disulfide + sulfite + adenosine 3',5'-bisphosphate + 2 H(+) = [thioredoxin]-dithiol + 3'-phosphoadenylyl sulfate. It participates in sulfur metabolism; hydrogen sulfide biosynthesis; sulfite from sulfate: step 3/3. In terms of biological role, the NADP dependent reduction of PAPS into sulfite involves thioredoxin which probably plays the role of a thiol carrier. The chain is Phosphoadenosine phosphosulfate reductase (sA) from Emericella nidulans (strain FGSC A4 / ATCC 38163 / CBS 112.46 / NRRL 194 / M139) (Aspergillus nidulans).